Reading from the N-terminus, the 277-residue chain is MALFIFLILVGYLMGSINSAIIVCRTFGLPDPREEGSKNPGATNVLRLGGKQYGIMVMVFDALKGILPVILAKLLSAEPVTVAFTALAAVVGHMYPVFFHFRGGKGVATTIGALLAFHFVIGVMVAATWLLVANFWRYSSLASIASISLAPFYSLILVGNLNIFPPLFMITILVLYKHRDNFNRLIDGKEPKIKFKHSVIEEIMEASPATSAEQEFPGKEVIDTNIDETEKTEQAEAVKKPKAKKATTKAKKTASKEETTKKPRSTKPKTKTVKEKE.

5 helical membrane passes run 3 to 23 (LFIF…AIIV), 55 to 75 (IMVM…AKLL), 79 to 99 (PVTV…PVFF), 111 to 131 (IGAL…TWLL), and 155 to 175 (LILV…ILVL). The segment at 207–277 (SPATSAEQEF…PKTKTVKEKE (71 aa)) is disordered. Residues 216 to 239 (FPGKEVIDTNIDETEKTEQAEAVK) are compositionally biased toward basic and acidic residues. Composition is skewed to basic residues over residues 240 to 253 (KPKA…AKKT) and 262 to 271 (KPRSTKPKTK).

It belongs to the PlsY family. In terms of assembly, probably interacts with PlsX.

The protein resides in the cell inner membrane. The catalysed reaction is an acyl phosphate + sn-glycerol 3-phosphate = a 1-acyl-sn-glycero-3-phosphate + phosphate. Its pathway is lipid metabolism; phospholipid metabolism. Functionally, catalyzes the transfer of an acyl group from acyl-phosphate (acyl-PO(4)) to glycerol-3-phosphate (G3P) to form lysophosphatidic acid (LPA). This enzyme utilizes acyl-phosphate as fatty acyl donor, but not acyl-CoA or acyl-ACP. In Legionella pneumophila (strain Paris), this protein is Glycerol-3-phosphate acyltransferase.